A 596-amino-acid chain; its full sequence is Elongation factor 4 (596 aa).

Residues 2-183 (ENIRNFSIIA…AIIERIPAPS (182 aa)) enclose the tr-type G domain. Residues 14-19 (DHGKST) and 130-133 (NKID) contribute to the GTP site.

The protein belongs to the TRAFAC class translation factor GTPase superfamily. Classic translation factor GTPase family. LepA subfamily.

The protein resides in the cell inner membrane. It carries out the reaction GTP + H2O = GDP + phosphate + H(+). In terms of biological role, required for accurate and efficient protein synthesis under certain stress conditions. May act as a fidelity factor of the translation reaction, by catalyzing a one-codon backward translocation of tRNAs on improperly translocated ribosomes. Back-translocation proceeds from a post-translocation (POST) complex to a pre-translocation (PRE) complex, thus giving elongation factor G a second chance to translocate the tRNAs correctly. Binds to ribosomes in a GTP-dependent manner. This chain is Elongation factor 4, found in Nitratiruptor sp. (strain SB155-2).